Here is a 463-residue protein sequence, read N- to C-terminus: Argininosuccinate lyase (463 aa).

Belongs to the lyase 1 family. Argininosuccinate lyase subfamily.

It is found in the cytoplasm. The catalysed reaction is 2-(N(omega)-L-arginino)succinate = fumarate + L-arginine. The protein operates within amino-acid biosynthesis; L-arginine biosynthesis; L-arginine from L-ornithine and carbamoyl phosphate: step 3/3. In Chlorobaculum tepidum (strain ATCC 49652 / DSM 12025 / NBRC 103806 / TLS) (Chlorobium tepidum), this protein is Argininosuccinate lyase.